The chain runs to 144 residues: Deoxyuridine 5'-triphosphate nucleotidohydrolase (144 aa).

Residues 63 to 65 (RSG), Asn76, and 80 to 82 (TID) each bind substrate.

It belongs to the dUTPase family. The cofactor is Mg(2+).

The catalysed reaction is dUTP + H2O = dUMP + diphosphate + H(+). The protein operates within pyrimidine metabolism; dUMP biosynthesis; dUMP from dCTP (dUTP route): step 2/2. In terms of biological role, this enzyme is involved in nucleotide metabolism: it produces dUMP, the immediate precursor of thymidine nucleotides and it decreases the intracellular concentration of dUTP so that uracil cannot be incorporated into DNA. This chain is Deoxyuridine 5'-triphosphate nucleotidohydrolase, found in Bacteroides fragilis (strain YCH46).